Consider the following 472-residue polypeptide: 3-isopropylmalate dehydratase large subunit (472 aa).

3 residues coordinate [4Fe-4S] cluster: Cys351, Cys412, and Cys415.

The protein belongs to the aconitase/IPM isomerase family. LeuC type 1 subfamily. In terms of assembly, heterodimer of LeuC and LeuD. [4Fe-4S] cluster is required as a cofactor.

The enzyme catalyses (2R,3S)-3-isopropylmalate = (2S)-2-isopropylmalate. The protein operates within amino-acid biosynthesis; L-leucine biosynthesis; L-leucine from 3-methyl-2-oxobutanoate: step 2/4. Functionally, catalyzes the isomerization between 2-isopropylmalate and 3-isopropylmalate, via the formation of 2-isopropylmaleate. The protein is 3-isopropylmalate dehydratase large subunit of Marinobacter nauticus (strain ATCC 700491 / DSM 11845 / VT8) (Marinobacter aquaeolei).